The sequence spans 302 residues: MEPGSTPPNGSAPATPGTPAPLFSSGGPRVDSLSYERKSMPRCKCLPLPAVEGWGVATHTCVVEIPAPDVSLTRKLGAEFVGTFILIFFATAAPIVNQKYGGAISPFGNAACAGLAVATVILSTGHISGAHLNPSLTIAFAALRHFPWLQVPAYVAVQALASVCAAFALKGVFHPFLSGGVTVPDATVSTAQAFFTEFIISFNLLFVVTAVATDTRAVGELAGIAVGAAVTLNILVAGPTTGGSMNPVRTLGPAVAAGNYRQLWIYLLAPTLGALAGASVYKAVKLRDENGETPRTQRSFRR.

Residues 1–31 (MEPGSTPPNGSAPATPGTPAPLFSSGGPRVD) are disordered. Residues 7 to 21 (PPNGSAPATPGTPAP) show a composition bias toward low complexity. 2 consecutive transmembrane segments (helical) span residues 76–96 (LGAEFVGTFILIFFATAAPIV) and 102–122 (GAISPFGNAACAGLAVATVIL). Positions 133–135 (NPS) match the NPA 1 motif. 3 consecutive transmembrane segments (helical) span residues 149-169 (LQVPAYVAVQALASVCAAFAL), 193-213 (AFFTEFIISFNLLFVVTAVAT), and 217-237 (AVGELAGIAVGAAVTLNILVA). The short motif at 246-248 (NPV) is the NPA 2 element. A helical transmembrane segment spans residues 264 to 284 (WIYLLAPTLGALAGASVYKAV).

This sequence belongs to the MIP/aquaporin (TC 1.A.8) family. NIP (TC 1.A.8.12) subfamily.

It is found in the membrane. Its function is as follows. Aquaporins facilitate the transport of water and small neutral solutes across cell membranes. In Zea mays (Maize), this protein is Aquaporin NIP3-1 (NIP3-1).